The sequence spans 243 residues: NAD-dependent protein deacetylase (243 aa).

Positions 1 to 243 (MKHDLETLKH…VSVVKSLMTE (243 aa)) constitute a Deacetylase sirtuin-type domain. Residues Ala-24, Phe-35, Arg-36, Gln-105, Ile-107, Asp-108, and His-123 each coordinate NAD(+). Position 35 (Phe-35) interacts with nicotinamide. 2 residues coordinate nicotinamide: Ile-107 and Asp-108. Residue His-123 is the Proton acceptor of the active site. Positions 131, 134, 151, and 154 each coordinate Zn(2+). 4 residues coordinate NAD(+): Ser-192, Ser-193, Asn-215, and Asp-232.

It belongs to the sirtuin family. Class U subfamily. Zn(2+) is required as a cofactor.

It localises to the cytoplasm. The catalysed reaction is N(6)-acetyl-L-lysyl-[protein] + NAD(+) + H2O = 2''-O-acetyl-ADP-D-ribose + nicotinamide + L-lysyl-[protein]. Functionally, NAD-dependent protein deacetylase which modulates the activities of several enzymes which are inactive in their acetylated form. This chain is NAD-dependent protein deacetylase, found in Staphylococcus aureus (strain NCTC 8325 / PS 47).